The sequence spans 399 residues: Phosphoglycerate kinase (399 aa).

Substrate-binding positions include 21-23, Arg-36, 59-62, Arg-120, and Arg-158; these read DFN and HLGR. ATP contacts are provided by residues Lys-209, Gly-297, Glu-328, and 355 to 358; that span reads GGDS.

It belongs to the phosphoglycerate kinase family. Monomer.

The protein resides in the cytoplasm. It carries out the reaction (2R)-3-phosphoglycerate + ATP = (2R)-3-phospho-glyceroyl phosphate + ADP. It functions in the pathway carbohydrate degradation; glycolysis; pyruvate from D-glyceraldehyde 3-phosphate: step 2/5. The protein is Phosphoglycerate kinase of Streptococcus suis (strain 05ZYH33).